We begin with the raw amino-acid sequence, 265 residues long: Indole-3-glycerol phosphate synthase (265 aa).

The protein belongs to the TrpC family.

The catalysed reaction is 1-(2-carboxyphenylamino)-1-deoxy-D-ribulose 5-phosphate + H(+) = (1S,2R)-1-C-(indol-3-yl)glycerol 3-phosphate + CO2 + H2O. Its pathway is amino-acid biosynthesis; L-tryptophan biosynthesis; L-tryptophan from chorismate: step 4/5. This chain is Indole-3-glycerol phosphate synthase, found in Hyphomonas neptunium (strain ATCC 15444).